The following is a 353-amino-acid chain: Lipase-specific foldase (353 aa).

The Cytoplasmic segment spans residues 1–19 (MAQADRPARGGLAARPMRG). The chain crosses the membrane as a helical span at residues 20 to 40 (ASFALAGLVACAACAAVVLWL). Topologically, residues 41–353 (RPAAPSPAPA…AASLDRGAGG (313 aa)) are periplasmic.

It belongs to the lipase chaperone family. Monomer. Interacts with lipase (lip).

The protein localises to the cell inner membrane. Its function is as follows. Involved in the folding of the extracellular lipase (lip) during its passage through the periplasm. This chain is Lipase-specific foldase, found in Burkholderia plantarii.